Consider the following 126-residue polypeptide: Protein ApaG (126 aa).

Positions 2–126 constitute an ApaG domain; the sequence is SALDTSIRVE…FRLATPGLLH (125 aa).

The chain is Protein ApaG from Shewanella sp. (strain W3-18-1).